The following is a 253-amino-acid chain: MNTQAATSPQFYLTAPAPCPYLAGEMERKVFTHLVGPRAPEMNDLLTQGGFRRSQNIAYRPACETCRACISVRIVAREFQPNRTMRRVAGVNADLTSSVFAAQPSTEQFSLFRTYLDHRHQQGGMSDMSALDFAIMVEDSHVKTKVIEYRLPKVDEDSDRPGELVAVALSDILSDGLSMVYSFFNPAMEKRSLGTFMVLDHIRRANEMGLPHVYLGYWVNGSRKMGYKIRFLPQEHLLSQGWTRYEPESGVEE.

It belongs to the R-transferase family. Bpt subfamily.

Its subcellular location is the cytoplasm. It carries out the reaction N-terminal L-glutamyl-[protein] + L-leucyl-tRNA(Leu) = N-terminal L-leucyl-L-glutamyl-[protein] + tRNA(Leu) + H(+). It catalyses the reaction N-terminal L-aspartyl-[protein] + L-leucyl-tRNA(Leu) = N-terminal L-leucyl-L-aspartyl-[protein] + tRNA(Leu) + H(+). In terms of biological role, functions in the N-end rule pathway of protein degradation where it conjugates Leu from its aminoacyl-tRNA to the N-termini of proteins containing an N-terminal aspartate or glutamate. The protein is Aspartate/glutamate leucyltransferase of Allorhizobium ampelinum (strain ATCC BAA-846 / DSM 112012 / S4) (Agrobacterium vitis (strain S4)).